Consider the following 185-residue polypeptide: Ribosome-recycling factor (185 aa).

It belongs to the RRF family.

It localises to the cytoplasm. In terms of biological role, responsible for the release of ribosomes from messenger RNA at the termination of protein biosynthesis. May increase the efficiency of translation by recycling ribosomes from one round of translation to another. The polypeptide is Ribosome-recycling factor (Aliarcobacter butzleri (strain RM4018) (Arcobacter butzleri)).